Consider the following 172-residue polypeptide: Protein/nucleic acid deglycase 2 (172 aa).

The PfpI endopeptidase domain occupies 3–171 (KKIAVLITDE…FNREALRLLG (169 aa)). Cys104 acts as the Nucleophile in catalysis.

It belongs to the peptidase C56 family. As to quaternary structure, exists in monomeric, trimeric, and hexameric forms.

It localises to the cytoplasm. It carries out the reaction N(omega)-(1-hydroxy-2-oxopropyl)-L-arginyl-[protein] + H2O = lactate + L-arginyl-[protein] + H(+). It catalyses the reaction N(6)-(1-hydroxy-2-oxopropyl)-L-lysyl-[protein] + H2O = lactate + L-lysyl-[protein] + H(+). The enzyme catalyses S-(1-hydroxy-2-oxopropyl)-L-cysteinyl-[protein] + H2O = lactate + L-cysteinyl-[protein] + H(+). The catalysed reaction is N(omega)-(1-hydroxy-2-oxoethyl)-L-arginyl-[protein] + H2O = L-arginyl-[protein] + glycolate + H(+). It carries out the reaction N(6)-(1-hydroxy-2-oxoethyl)-L-lysyl-[protein] + H2O = glycolate + L-lysyl-[protein] + H(+). It catalyses the reaction S-(1-hydroxy-2-oxoethyl)-L-cysteinyl-[protein] + H2O = glycolate + L-cysteinyl-[protein] + H(+). The enzyme catalyses N(2)-(1-hydroxy-2-oxopropyl)-dGTP + H2O = lactate + dGTP + H(+). The catalysed reaction is N(2)-(1-hydroxy-2-oxopropyl)-GTP + H2O = lactate + GTP + H(+). It carries out the reaction N(2)-(1-hydroxy-2-oxopropyl)-GDP + H2O = lactate + GDP + H(+). It catalyses the reaction N(2)-(1-hydroxy-2-oxopropyl)-GMP + H2O = lactate + GMP + H(+). The enzyme catalyses N(2)-(1-hydroxy-2-oxoethyl)-dGTP + H2O = dGTP + glycolate + H(+). The catalysed reaction is N(2)-(1-hydroxy-2-oxoethyl)-GTP + H2O = glycolate + GTP + H(+). It carries out the reaction N(2)-(1-hydroxy-2-oxoethyl)-GDP + H2O = glycolate + GDP + H(+). It catalyses the reaction N(2)-(1-hydroxy-2-oxoethyl)-GMP + H2O = glycolate + GMP + H(+). The enzyme catalyses an N(2)-(1-hydroxy-2-oxopropyl)-guanosine in RNA + H2O = a guanosine in RNA + lactate + H(+). The catalysed reaction is an N(2)-(1-hydroxy-2-oxopropyl)-2'-deoxyguanosine in DNA + H2O = a 2'-deoxyguanosine in DNA + lactate + H(+). It carries out the reaction an N(2)-(1-hydroxy-2-oxoethyl)-guanosine in RNA + H2O = a guanosine in RNA + glycolate + H(+). It catalyses the reaction an N(2)-(1-hydroxy-2-oxoethyl)-2'-deoxyguanosine in DNA + H2O = a 2'-deoxyguanosine in DNA + glycolate + H(+). With respect to regulation, glyoxalase activity is inhibited by zinc ions at pH 7.0. Its function is as follows. Protein and nucleotide deglycase that catalyzes the deglycation of the Maillard adducts formed between amino groups of proteins or nucleotides and reactive carbonyl groups of glyoxals. Thus, functions as a protein deglycase that repairs methylglyoxal- and glyoxal-glycated proteins, and releases repaired proteins and lactate or glycolate, respectively. Deglycates cysteine, arginine and lysine residues in proteins, and thus reactivates these proteins by reversing glycation by glyoxals. Is able to repair glycated serum albumin, collagen, glyceraldehyde-3-phosphate dehydrogenase, and fructose biphosphate aldolase. Acts on early glycation intermediates (hemithioacetals and aminocarbinols), preventing the formation of advanced glycation endproducts (AGE) that cause irreversible damage. Also functions as a nucleotide deglycase able to repair glycated guanine in the free nucleotide pool (GTP, GDP, GMP, dGTP) and in DNA and RNA. Is thus involved in a major nucleotide repair system named guanine glycation repair (GG repair), dedicated to reversing methylglyoxal and glyoxal damage via nucleotide sanitization and direct nucleic acid repair. In vitro, prevents acrylamide formation in asparagine/glyoxal and asparagine/sugar mixtures at 55 degrees Celsius, likely by degrading asparagine/glyoxal Maillard adducts formed at high temperatures. Also displays an apparent glyoxalase activity that in fact reflects its deglycase activity. Is a general stress protein; is required for the protection of bacterial cells against many environmental stresses, including oxidative, thermal, osmotic, UV, and pH stresses. And plays an important role in protection against electrophile/carbonyl stress. This chain is Protein/nucleic acid deglycase 2 (yhbO), found in Escherichia coli (strain K12).